Here is a 502-residue protein sequence, read N- to C-terminus: Glycerol kinase (502 aa).

Position 14 (threonine 14) interacts with ADP. Residues threonine 14, threonine 15, and serine 16 each contribute to the ATP site. Threonine 14 is a sn-glycerol 3-phosphate binding site. Arginine 18 contributes to the ADP binding site. Sn-glycerol 3-phosphate-binding residues include arginine 84, glutamate 85, tyrosine 136, and aspartate 246. Glycerol is bound by residues arginine 84, glutamate 85, tyrosine 136, aspartate 246, and glutamine 247. ADP is bound by residues threonine 268 and glycine 311. Threonine 268, glycine 311, glutamine 315, and glycine 412 together coordinate ATP. Residues glycine 412 and asparagine 416 each contribute to the ADP site.

It belongs to the FGGY kinase family. In terms of assembly, homotetramer and homodimer (in equilibrium). Heterodimer with EIIA-Glc. Binds 1 zinc ion per glycerol kinase EIIA-Glc dimer. The zinc ion is important for dimerization.

The catalysed reaction is glycerol + ATP = sn-glycerol 3-phosphate + ADP + H(+). It participates in polyol metabolism; glycerol degradation via glycerol kinase pathway; sn-glycerol 3-phosphate from glycerol: step 1/1. With respect to regulation, activity of this regulatory enzyme is affected by several metabolites. Allosterically and non-competitively inhibited by fructose 1,6-bisphosphate (FBP) and unphosphorylated phosphocarrier protein EIIA-Glc (III-Glc), an integral component of the bacterial phosphotransferase (PTS) system. Functionally, key enzyme in the regulation of glycerol uptake and metabolism. Catalyzes the phosphorylation of glycerol to yield sn-glycerol 3-phosphate. The chain is Glycerol kinase from Salmonella heidelberg (strain SL476).